Reading from the N-terminus, the 1012-residue chain is PHD finger protein 20 (1012 aa).

Tudor domains lie at 4-69 (HPPN…RPLE) and 83-147 (GSSE…GNAR). Positions 142 to 336 (IVGNARPKET…RSSRLSTNGT (195 aa)) are disordered. Basic and acidic residues predominate over residues 147-245 (RPKETDHKSL…QVDKKPENDI (99 aa)). Phosphoserine is present on Ser159. A DNA-binding region (a.T hook) is located at residues 257-269 (KRKRGRPPSIAPT). Over residues 271 to 280 (VDSNSQTLQP) the composition is skewed to polar residues. The span at 297–325 (PLKRPRLDKNSSQEKSKNYSENTDKDLSR) shows a compositional bias: basic and acidic residues. The C2H2-type zinc finger occupies 452-477 (FRCKVVDCLKFFRKAKLLHYHMKYFH). The span at 481–490 (KSLEPEESPG) shows a compositional bias: basic and acidic residues. The disordered stretch occupies residues 481–611 (KSLEPEESPG…KGKVKALEED (131 aa)). Ser488 carries the post-translational modification Phosphoserine. Polar residues predominate over residues 497–509 (RGPSASDKPSQET). Positions 522 to 538 (TKDKEKNKEKKFKEFVR) are enriched in basic and acidic residues. The segment covering 539–551 (VKPKKKKKKKKKT) has biased composition (basic residues). The segment at 654 to 700 (RCICEVQEENDFMIQCEECQCWQHGVCMGLLEENVPEKYTCYVCQDP) adopts a PHD-type zinc-finger fold. Position 843 is an N6-acetyllysine (Lys843). The segment at 866–912 (DAVNPLHENGDDSLSPRLGWPLDQDRSKGDSDPKPGSPKVKEYVSKK) is disordered. Ser878 and Ser880 each carry phosphoserine. A compositionally biased stretch (basic and acidic residues) spans 888–912 (DQDRSKGDSDPKPGSPKVKEYVSKK).

In terms of assembly, homodimer; disulfide-linked. Component of some MLL1/MLL complex, at least composed of the core components KMT2A/MLL1, ASH2L, HCFC1, WDR5 and RBBP5, as well as the facultative components BACC1, CHD8, E2F6, HSP70, INO80C, KANSL1, LAS1L, MAX, MCRS1, MGA, KAT8/MOF, PELP1, PHF20, PRP31, RING2, RUVB1/TIP49A, RUVB2/TIP49B, SENP3, TAF1, TAF4, TAF6, TAF7, TAF9 and TEX10. Component of the NSL complex at least composed of MOF/KAT8, KANSL1, KANSL2, KANSL3, MCRS1, PHF20, OGT1/OGT, WDR5 and HCFC1. Post-translationally, ubiquitinated by TRIM26; leading to proteasomal degradation. Expressed in heart, kidney, liver, lung, pancreas, placenta, spleen and testis. Not expressed in brain, skeletal muscle, colon, ovary, prostate, small intestine and thymus. Expressed in colon and ovary cancer cell lines while it is not expressed in the respective normal tissues.

It localises to the nucleus. Methyllysine-binding protein, component of the MOF histone acetyltransferase protein complex. Not required for maintaining the global histone H4 'Lys-16' acetylation (H4K16ac) levels or locus specific histone acetylation, but instead works downstream in transcriptional regulation of MOF target genes. As part of the NSL complex it may be involved in acetylation of nucleosomal histone H4 on several lysine residues. Contributes to methyllysine-dependent p53/TP53 stabilization and up-regulation after DNA damage. The polypeptide is PHD finger protein 20 (PHF20) (Homo sapiens (Human)).